The chain runs to 593 residues: Monoterpene synthase 7, chloroplastic (593 aa).

The transit peptide at 1-39 directs the protein to the chloroplast; that stretch reads MSVSLSFAASATFGFRGGLGGFSRPAAAIKQWRCLPRIQ. 4 residues coordinate Mg(2+): aspartate 348, aspartate 352, aspartate 491, and glutamate 499. Positions 348–352 match the DDXXD motif motif; sequence DDVYD.

The protein belongs to the terpene synthase family. Tpsa subfamily. It depends on Mg(2+) as a cofactor. Mn(2+) serves as cofactor. As to expression, highly expressed in flowers, petals and sepals, but almost undetectable in vegetative organs.

It localises to the plastid. Its subcellular location is the chloroplast. The enzyme catalyses (2E)-geranyl diphosphate = sabinene + diphosphate. It carries out the reaction (2E)-geranyl diphosphate = terpinolene + diphosphate. The catalysed reaction is (2E)-geranyl diphosphate = alpha-pinene + diphosphate. It catalyses the reaction (2E)-geranyl diphosphate = beta-pinene + diphosphate. The enzyme catalyses (2E)-geranyl diphosphate = beta-myrcene + diphosphate. It carries out the reaction (2E)-geranyl diphosphate = alpha-terpinene + diphosphate. The catalysed reaction is (2E)-geranyl diphosphate = beta-phellandrene + diphosphate. It catalyses the reaction (2E)-geranyl diphosphate = gamma-terpinene + diphosphate. It participates in secondary metabolite biosynthesis; terpenoid biosynthesis. Monoterpene synthase involved in the biosynthesis of volatile compounds present in floral scent. Mediates the conversion of (2E)-geranyl diphosphate (GPP) into sabinene and sub-products such as alpha-thujene, alpha-pinene, beta-pinene, myrcene, alpha-phellandrene, alpha-terpinene, beta-phellandrene, gamma-terpinene and terpinolene. Unable to use farnesyl diphosphate (FPP) as substrate. The polypeptide is Monoterpene synthase 7, chloroplastic (Hedychium coronarium (White butterfly ginger-lily)).